The sequence spans 218 residues: MWPPCGAMRNLALVLARSQRARACSGNERVSYTQGQSPEPRTREYFYYVDHQGQLFLDDSKMKNFITCFKDLQFLVTFFSRLRPNHSGRYEASFPFLSLCGRERNFLRCEDRPVVFTHLLASDSESPRLSYCGGGEALAIPFEPARLLPLAANGRLYHPAPERAGGVGLVRSALAFELSACFEYGPNSPTVPSHVQWQGRRIALTMDLAPLLLAAPPP.

This sequence belongs to the UPF0598 family.

In Rattus norvegicus (Rat), this protein is UPF0598 protein C8orf82 homolog.